The sequence spans 251 residues: Gamma-gliadin (251 aa).

A signal peptide spans 1-19 (MKTLLILTILAMAITIGTA). The disordered stretch occupies residues 26–143 (SSQVQWPQQQ…QQSFPQQQPP (118 aa)). Low complexity predominate over residues 42 to 81 (QPFSQQPQQTFPQPQQTFPHQPQQQFPQPQQPQQQFLQPQ). The segment covering 82–99 (QPFPQQPQQPYPQQPQQP) has biased composition (pro residues). The span at 100-139 (FPQTQQPQQLFPQSQQPQQQFSQPQQQFPQPQQPQQSFPQ) shows a compositional bias: low complexity.

The protein belongs to the gliadin/glutenin family.

In terms of biological role, gliadin is the major seed storage protein in wheat. The polypeptide is Gamma-gliadin (Triticum aestivum (Wheat)).